Consider the following 225-residue polypeptide: 7-cyano-7-deazaguanine synthase (225 aa).

ATP is bound at residue V10–I20. 4 residues coordinate Zn(2+): C189, C199, C202, and C205.

It belongs to the QueC family. The cofactor is Zn(2+).

The enzyme catalyses 7-carboxy-7-deazaguanine + NH4(+) + ATP = 7-cyano-7-deazaguanine + ADP + phosphate + H2O + H(+). It participates in purine metabolism; 7-cyano-7-deazaguanine biosynthesis. Catalyzes the ATP-dependent conversion of 7-carboxy-7-deazaguanine (CDG) to 7-cyano-7-deazaguanine (preQ(0)). The sequence is that of 7-cyano-7-deazaguanine synthase from Cellvibrio japonicus (strain Ueda107) (Pseudomonas fluorescens subsp. cellulosa).